Consider the following 536-residue polypeptide: MALTSFLPAPTQLSQDQLEAEEKARSQRSRQTSLVSSRREPPPYGYRKGWIPRLLEDFGDGGAFPEIHVAQYPLDMGRKKKMSNALAIQVDAEGKIKYDAIARQGQSKDKVIYSKYTDLVPKEVMNADDPDLQRPDEEAIKEITEKTRVALEKSVSQKVAAAMPVRAADKLAPAQYIRYTPSQQGVAFNSGAKQRVIRMVEMQKDPMEPPRFKINKKIPRGPPSPPAPVMHSPSRKMTVKEQQEWKIPPCISNWKNAKGYTIPLDKRLAADGRGLQTVHINENFAKLAEALYIADRKAREAVEMRAQVERKMAQKEKEKHEEKLREMAQKARERRAGIKTHVEKEDGEARERDEIRHDRRKERQHDRNLSRAAPDKRSKLQRNENRDISEVIALGVPNPRTSNEVQYDQRLFNQSKGMDSGFAGGEDEIYNVYDQAWRGGKDMAQNIYRPSKNLDKDMYGDDLEARIKTNRFVPDKEFSGSDRRQRGREGPVQFEEDPFGLDKFLEEAKQHGGSKRPSDSSRPKEHEHEGKKRRKE.

Residues 1–46 (MALTSFLPAPTQLSQDQLEAEEKARSQRSRQTSLVSSRREPPPYGY) are disordered. At alanine 2 the chain carries N-acetylalanine. Serine 14 is modified (phosphoserine). A Glycyl lysine isopeptide (Lys-Gly) (interchain with G-Cter in SUMO2) cross-link involves residue lysine 23. Residues 59 to 79 (GDGGAFPEIHVAQYPLDMGRK) form an interaction with PPIL1 region. Residues lysine 81, lysine 97, lysine 115, lysine 122, lysine 141, lysine 158, and lysine 170 each participate in a glycyl lysine isopeptide (Lys-Gly) (interchain with G-Cter in SUMO2) cross-link. The interval 174-339 (AQYIRYTPSQ…KARERRAGIK (166 aa)) is SNW. Phosphoserine occurs at positions 182 and 190. Lysine 193 is covalently cross-linked (Glycyl lysine isopeptide (Lys-Gly) (interchain with G-Cter in SUMO2)). The interval 209-233 (PPRFKINKKIPRGPPSPPAPVMHSP) is disordered. Phosphoserine is present on residues serine 224, serine 232, and serine 234. Glycyl lysine isopeptide (Lys-Gly) (interchain with G-Cter in SUMO2) cross-links involve residues lysine 240, lysine 258, lysine 286, lysine 339, lysine 344, lysine 416, lysine 441, and lysine 452. Positions 311–386 (KMAQKEKEKH…RSKLQRNENR (76 aa)) are disordered. 2 stretches are compositionally biased toward basic and acidic residues: residues 472–489 (FVPD…RGRE) and 503–530 (KFLE…EHEG). Residues 472 to 536 (FVPDKEFSGS…EHEGKKRRKE (65 aa)) are disordered. 2 positions are modified to phosphoserine: serine 479 and serine 481. Lysine 509 is covalently cross-linked (Glycyl lysine isopeptide (Lys-Gly) (interchain with G-Cter in SUMO2)).

Belongs to the SNW family. As to quaternary structure, identified in the spliceosome C complex. Associates with U4/U6-U5 tri-small nuclear ribonucleoproteins (U4/U6-U5 tri-snRNPs). Component of the minor spliceosome, which splices U12-type introns. Interacts with SKI, SMAD2,SMAD3, RBPJ, RB1, PABPN1, MAGEA1, SIRT1, FOXN3, U2AF2, PPIL1, DAXX and ATP1B4. Interacts with VDR and RXRA; preferentially associates with VDR:RXRA heterodimers. Interacts with NCOR2. Interacts with MAML1. Interacts with NOTCH1 NICD; the interaction involves multimerized NOTCH1 NICD. Forms a complex with NOTCH1 NICD and MAML1; the association is dissociated by RBPJ. Associates with positive transcription elongation factor b (P-TEFb). Component of the SNARP complex which consists at least of SNIP1, SNW1, THRAP3, BCLAF1 and PNN.

It is found in the nucleus. In terms of biological role, involved in pre-mRNA splicing as component of the spliceosome. As a component of the minor spliceosome, involved in the splicing of U12-type introns in pre-mRNAs. Required in the specific splicing of CDKN1A pre-mRNA; the function probably involves the recruitment of U2AF2 to the mRNA. May recruit PPIL1 to the spliceosome. May be involved in cyclin-D1/CCND1 mRNA stability through the SNARP complex which associates with both the 3'end of the CCND1 gene and its mRNA. Involved in transcriptional regulation. Modulates TGF-beta-mediated transcription via association with SMAD proteins, MYOD1-mediated transcription via association with PABPN1, RB1-mediated transcriptional repression, and retinoid-X receptor (RXR)- and vitamin D receptor (VDR)-dependent gene transcription in a cell line-specific manner probably involving coactivators NCOA1 and GRIP1. Is involved in NOTCH1-mediated transcriptional activation. Binds to multimerized forms of Notch intracellular domain (NICD) and is proposed to recruit transcriptional coactivators such as MAML1 to form an intermediate preactivation complex which associates with DNA-bound CBF-1/RBPJ to form a transcriptional activation complex by releasing SNW1 and redundant NOTCH1 NICD. The protein is SNW domain-containing protein 1 (SNW1) of Bos taurus (Bovine).